Reading from the N-terminus, the 329-residue chain is Src kinase-associated phosphoprotein 2 (329 aa).

Residues 58–95 are disordered; sequence YAEDSEEEEDWDSNEGGSLQSERTDKDEEACEGAQQAP. Residues 61-70 are compositionally biased toward acidic residues; sequence DSEEEEDWDS. The PH domain occupies 104-207; the sequence is SVFKAGYLEK…WVKQIDFVLK (104 aa). Residues 240-263 are disordered; that stretch reads EDMPSPPPKVEPVSKHPPPTPAVD. Positions 243-260 are enriched in pro residues; that stretch reads PSPPPKVEPVSKHPPPTP. An SH3 domain is found at 267–328; that stretch reads DYANYYQGLW…PKDYLMELYA (62 aa).

This sequence belongs to the SKAP family. Phosphorylated on tyrosines.

The protein localises to the cytoplasm. Its function is as follows. May be involved in B-cell and macrophage adhesion processes. May play a role in src signaling pathway. This is Src kinase-associated phosphoprotein 2 (skap2) from Takifugu rubripes (Japanese pufferfish).